Here is a 161-residue protein sequence, read N- to C-terminus: Large ribosomal subunit protein bL9 (161 aa).

This sequence belongs to the bacterial ribosomal protein bL9 family.

Binds to the 23S rRNA. This chain is Large ribosomal subunit protein bL9, found in Protochlamydia amoebophila (strain UWE25).